The chain runs to 105 residues: Precursor of CEP15 (105 aa).

A signal peptide spans 1-29; sequence MDATKIKFDVILLSFLLIISGIPSNLGLS. Residues 30 to 90 constitute a propeptide that is removed on maturation; sequence TSVRGTTRSE…PSPPVPDYDD (61 aa). Residues 68–80 show a composition bias toward low complexity; that stretch reads DYYDGGSSSSTTS. Positions 68-105 are disordered; the sequence is DYYDGGSSSSTTSPSPPVPDYDDIYRRQGDVPSPGIGH. A hydroxyproline mark is found at P99 and P101.

Belongs to the C-terminally encoded plant signaling peptide (CEP) family. In terms of assembly, interacts with CEP receptors (e.g. CEPR1 and CEPR2). In terms of processing, the mature small signaling peptide is generated by proteolytic processing of the longer precursor.

It localises to the secreted. The protein resides in the extracellular space. Its subcellular location is the apoplast. Extracellular signaling peptide that may regulate primary root growth rate and systemic nitrogen (N)-demand signaling. The protein is Precursor of CEP15 of Arabidopsis thaliana (Mouse-ear cress).